We begin with the raw amino-acid sequence, 576 residues long: Proline--tRNA ligase (576 aa).

It belongs to the class-II aminoacyl-tRNA synthetase family. ProS type 1 subfamily. In terms of assembly, homodimer.

It is found in the cytoplasm. The enzyme catalyses tRNA(Pro) + L-proline + ATP = L-prolyl-tRNA(Pro) + AMP + diphosphate. Catalyzes the attachment of proline to tRNA(Pro) in a two-step reaction: proline is first activated by ATP to form Pro-AMP and then transferred to the acceptor end of tRNA(Pro). As ProRS can inadvertently accommodate and process non-cognate amino acids such as alanine and cysteine, to avoid such errors it has two additional distinct editing activities against alanine. One activity is designated as 'pretransfer' editing and involves the tRNA(Pro)-independent hydrolysis of activated Ala-AMP. The other activity is designated 'posttransfer' editing and involves deacylation of mischarged Ala-tRNA(Pro). The misacylated Cys-tRNA(Pro) is not edited by ProRS. This Psychrobacter sp. (strain PRwf-1) protein is Proline--tRNA ligase.